The sequence spans 466 residues: Ribulose bisphosphate carboxylase large chain (466 aa).

Position 5 is an N6,N6,N6-trimethyllysine (Lys-5). The substrate site is built by Asn-114 and Thr-164. Lys-166 (proton acceptor) is an active-site residue. Substrate is bound at residue Lys-168. Mg(2+) is bound by residues Lys-192, Asp-194, and Glu-195. Lys-192 is subject to N6-carboxylysine. Catalysis depends on His-285, which acts as the Proton acceptor. Arg-286, His-318, and Ser-370 together coordinate substrate.

It belongs to the RuBisCO large chain family. Type I subfamily. As to quaternary structure, heterohexadecamer of 8 large chains and 8 small chains; disulfide-linked. The disulfide link is formed within the large subunit homodimers. Mg(2+) is required as a cofactor. In terms of processing, the disulfide bond which can form in the large chain dimeric partners within the hexadecamer appears to be associated with oxidative stress and protein turnover.

Its subcellular location is the plastid. It localises to the chloroplast. It carries out the reaction 2 (2R)-3-phosphoglycerate + 2 H(+) = D-ribulose 1,5-bisphosphate + CO2 + H2O. It catalyses the reaction D-ribulose 1,5-bisphosphate + O2 = 2-phosphoglycolate + (2R)-3-phosphoglycerate + 2 H(+). Functionally, ruBisCO catalyzes two reactions: the carboxylation of D-ribulose 1,5-bisphosphate, the primary event in carbon dioxide fixation, as well as the oxidative fragmentation of the pentose substrate in the photorespiration process. Both reactions occur simultaneously and in competition at the same active site. The polypeptide is Ribulose bisphosphate carboxylase large chain (Thespesia populnea (Portia tree)).